The primary structure comprises 215 residues: Ras-like GTP-binding protein RHO1 (215 aa).

The GTP site is built by Ala-30, Val-31, Gly-32, Lys-33, Thr-34, and Cys-35. Thr-34 is a binding site for Mg(2+). 2 consecutive short sequence motifs (switch) follow at residues Gly-43–Phe-54 and Asp-74–Asp-93. Residue Thr-52 coordinates Mg(2+). Asp-135 and Ser-166 together coordinate GTP. The tract at residues Val-194 to Gln-215 is disordered. Positions Thr-195–Thr-204 are enriched in low complexity. Over residues Gln-206 to Gln-215 the composition is skewed to basic residues. Position 212 is a cysteine methyl ester (Cys-212). Cys-212 carries S-geranylgeranyl cysteine lipidation. Positions Leu-213–Gln-215 are cleaved as a propeptide — removed in mature form.

It belongs to the small GTPase superfamily. Rho family. As to quaternary structure, interacts (GTP-bound form) with formin1 (via GBD/FH3 domain); the interaction activates formin1. Interacts (GTP-bound form) with profilin1. Interacts (GDP-bound form and when prenylated) with RhoGDI. It depends on Mg(2+) as a cofactor.

The protein resides in the cell membrane. Its subcellular location is the cytoplasm. It is found in the cytoskeleton. It localises to the cell projection. The protein localises to the phagocytic cup. The protein resides in the cytoplasmic vesicle. Its subcellular location is the phagosome. The catalysed reaction is GTP + H2O = GDP + phosphate + H(+). With respect to regulation, regulated by guanine nucleotide exchange factors (GEFs) which promote the exchange of bound GDP for free GTP, GTPase activating proteins (GAPs) which increase the GTP hydrolysis activity and GDP dissociation inhibitors which inhibit the dissociation of the nucleotide from the GTPase. Small GTPase which cycles between active GTP-bound and inactive GDP-bound states. Involved in actin cytoskeleton remodeling. Regulates phagocytosis by modulating actin cytoskeleton dynamics through the recruitment of formin1 and profilin1 to the phagocytosis nucleation site. The sequence is that of Ras-like GTP-binding protein RHO1 from Entamoeba histolytica (strain ATCC 30459 / HM-1:IMSS / ABRM).